Consider the following 166-residue polypeptide: MKNEAYYQAYLSHHHISRRGLLRHVFPATKSTIEKTQSRPPFSAREDLFSAVCNGCGECASACPNGLIQLKQQQATLEIDYAPCDLCGKCAEVCPTNALHPNFPGDTLLRPQFSSACLILQNQTCPDCQTACPLQAISSTLEIDNERCNGCGECKITCFVAAITLK.

3 consecutive 4Fe-4S ferredoxin-type domains span residues 44 to 73 (ARED…LKQQ), 75 to 104 (ATLE…PNFP), and 139 to 166 (STLE…ITLK). Residues Cys-53, Cys-56, Cys-59, Cys-63, Cys-84, Cys-87, Cys-90, and Cys-94 each coordinate [4Fe-4S] cluster.

This is an uncharacterized protein from Haemophilus influenzae (strain ATCC 51907 / DSM 11121 / KW20 / Rd).